Here is a 143-residue protein sequence, read N- to C-terminus: Hemoglobin subunit alpha (143 aa).

The region spanning arginine 2–arginine 143 is the Globin domain. Histidine 60 contacts O2. Histidine 89 is a binding site for heme b.

This sequence belongs to the globin family. As to quaternary structure, heterotetramer of two alpha chains and two beta chains. In terms of tissue distribution, red blood cells.

In terms of biological role, involved in oxygen transport from the lung to the various peripheral tissues. This chain is Hemoglobin subunit alpha (HBA), found in Lepidosiren paradoxus (South American lungfish).